The following is a 73-amino-acid chain: uncharacterized protein (73 aa).

This is an uncharacterized protein from Schizosaccharomyces pombe (strain 972 / ATCC 24843) (Fission yeast).